The chain runs to 216 residues: Transmembrane protein 125 (216 aa).

Helical transmembrane passes span Leu-32–Leu-52, Leu-65–Ser-85, Ala-111–Leu-131, and Met-144–Leu-164.

Its subcellular location is the membrane. This is Transmembrane protein 125 (Tmem125) from Mus musculus (Mouse).